The sequence spans 56 residues: Large ribosomal subunit protein bL33 (56 aa).

The protein belongs to the bacterial ribosomal protein bL33 family.

The protein is Large ribosomal subunit protein bL33 of Acidovorax sp. (strain JS42).